A 95-amino-acid polypeptide reads, in one-letter code: Co-chaperonin GroES (95 aa).

This sequence belongs to the GroES chaperonin family. In terms of assembly, heptamer of 7 subunits arranged in a ring. Interacts with the chaperonin GroEL.

Its subcellular location is the cytoplasm. Its function is as follows. Together with the chaperonin GroEL, plays an essential role in assisting protein folding. The GroEL-GroES system forms a nano-cage that allows encapsulation of the non-native substrate proteins and provides a physical environment optimized to promote and accelerate protein folding. GroES binds to the apical surface of the GroEL ring, thereby capping the opening of the GroEL channel. The chain is Co-chaperonin GroES from Geobacter sulfurreducens (strain ATCC 51573 / DSM 12127 / PCA).